We begin with the raw amino-acid sequence, 363 residues long: Ly6/PLAUR domain-containing protein 3 (363 aa).

The N-terminal stretch at 1-32 (MDAARRGDTQPVMWTTGWLLLLPLLLCEGAQA) is a signal peptide. Residues 35 to 128 (CYSCVQKADD…LNLTLRGLNP (94 aa)) form the UPAR/Ly6 1 domain. Residues Asn-120, Asn-131, Asn-178, and Asn-185 are each glycosylated (N-linked (GlcNAc...) asparagine). Positions 142–224 (CYSCVGLSRE…GSCCQGPRCN (83 aa)) constitute a UPAR/Ly6 2 domain. Positions 238–248 (PPLVLLPPPTT) are enriched in pro residues. 2 disordered regions span residues 238-287 (PPLV…TSPH) and 301-336 (LSGG…GGAQ). Positions 249–278 (AAPSTRAQNSSSTTSTAAPTTTTSIIKPTT) are enriched in low complexity. Residues 304 to 318 (GAAGHGGTAGHGGAA) are compositionally biased toward gly residues. The segment covering 320 to 330 (HQDRSNMEKYP) has biased composition (basic and acidic residues). Ser-343 is lipidated: GPI-anchor amidated serine. Positions 344–363 (GTLGSWLSAVLLTVVAGAML) are cleaved as a propeptide — removed in mature form.

In terms of assembly, binds laminin-1 and laminin-5. Interacts with LGALS3. Interacts with AGR2 and AGR3.

The protein resides in the cell membrane. Supports cell migration. May be involved in tumor progression. The protein is Ly6/PLAUR domain-containing protein 3 (Lypd3) of Mus musculus (Mouse).